Reading from the N-terminus, the 335-residue chain is RNA 3'-terminal phosphate cyclase (335 aa).

Residues Gln-101 and 282–285 (HMGD) contribute to the ATP site. His-306 serves as the catalytic Tele-AMP-histidine intermediate.

The protein belongs to the RNA 3'-terminal cyclase family. Type 1 subfamily.

The protein localises to the cytoplasm. The catalysed reaction is a 3'-end 3'-phospho-ribonucleotide-RNA + ATP = a 3'-end 2',3'-cyclophospho-ribonucleotide-RNA + AMP + diphosphate. Functionally, catalyzes the conversion of 3'-phosphate to a 2',3'-cyclic phosphodiester at the end of RNA. The mechanism of action of the enzyme occurs in 3 steps: (A) adenylation of the enzyme by ATP; (B) transfer of adenylate to an RNA-N3'P to produce RNA-N3'PP5'A; (C) and attack of the adjacent 2'-hydroxyl on the 3'-phosphorus in the diester linkage to produce the cyclic end product. The biological role of this enzyme is unknown but it is likely to function in some aspects of cellular RNA processing. The protein is RNA 3'-terminal phosphate cyclase of Sulfolobus acidocaldarius (strain ATCC 33909 / DSM 639 / JCM 8929 / NBRC 15157 / NCIMB 11770).